The following is a 502-amino-acid chain: Na(+)/H(+) antiporter NhaB (502 aa).

11 helical membrane-spanning segments follow: residues 27 to 49, 66 to 86, 95 to 115, 128 to 148, 149 to 169, 241 to 261, 299 to 318, 350 to 370, 394 to 414, 450 to 470, and 477 to 497; these read AFLV…VLIL, PGGL…ESVF, VILL…LLLY, IVLS…LDAL, TVTA…HQFA, FFLQ…VTCI, IAAL…SLAL, FEEA…VAVI, MFFI…VATV, ATPN…APLI, and MVLM…IAVY.

The protein belongs to the NhaB Na(+)/H(+) (TC 2.A.34) antiporter family.

It localises to the cell inner membrane. The catalysed reaction is 2 Na(+)(in) + 3 H(+)(out) = 2 Na(+)(out) + 3 H(+)(in). Na(+)/H(+) antiporter that extrudes sodium in exchange for external protons. This chain is Na(+)/H(+) antiporter NhaB, found in Teredinibacter turnerae (strain ATCC 39867 / T7901).